Consider the following 121-residue polypeptide: Basic phospholipase A2 VRV-PL-VIIIa (121 aa).

7 disulfide bridges follow: C26/C115, C28/C44, C43/C95, C49/C121, C50/C88, C57/C81, and C75/C86. Residues Y27, G29, and G31 each coordinate Ca(2+). H47 is an active-site residue. D48 serves as a coordination point for Ca(2+). The active site involves D89.

The protein belongs to the phospholipase A2 family. Group II subfamily. D49 sub-subfamily. As to quaternary structure, monomer. Requires Ca(2+) as cofactor. In terms of tissue distribution, expressed by the venom gland.

The protein resides in the secreted. The enzyme catalyses a 1,2-diacyl-sn-glycero-3-phosphocholine + H2O = a 1-acyl-sn-glycero-3-phosphocholine + a fatty acid + H(+). Oxyphenbutazone (OPB), anisic acid and atropine inhibit the enzymatic activity by binding at the substrate-binding site. P-coumaric acid, resveratrol, spermidine, corticosterone and gramine derivative inhibit the enzymatic activity by binding at the substrate-binding site. In terms of biological role, snake venom phospholipase A2 (PLA2) that shows weak neurotoxicity and medium anticoagulant effects by binding to factor Xa (F10) and inhibiting the prothrombinase activity (IC(50) is 130 nM). It also damages vital organs such as lung, liver and kidney, displays edema-inducing activities when injected into the foot pads of mice and induces necrosis of muscle cells when injected into the thigh muscle. Has a low enzymatic activity. PLA2 catalyzes the calcium-dependent hydrolysis of the 2-acyl groups in 3-sn-phosphoglycerides. This Daboia russelii (Russel's viper) protein is Basic phospholipase A2 VRV-PL-VIIIa.